A 404-amino-acid polypeptide reads, in one-letter code: Imidazolonepropionase (404 aa).

Positions 73 and 75 each coordinate Fe(3+). Zn(2+)-binding residues include His-73 and His-75. Residues Arg-82, Tyr-145, and His-178 each contribute to the 4-imidazolone-5-propanoate site. N-formimidoyl-L-glutamate is bound at residue Tyr-145. A Fe(3+)-binding site is contributed by His-243. Residue His-243 coordinates Zn(2+). Residue Gln-246 participates in 4-imidazolone-5-propanoate binding. Residue Asp-318 participates in Fe(3+) binding. Zn(2+) is bound at residue Asp-318. 2 residues coordinate N-formimidoyl-L-glutamate: Asn-320 and Gly-322. Ser-323 is a binding site for 4-imidazolone-5-propanoate.

It belongs to the metallo-dependent hydrolases superfamily. HutI family. Requires Zn(2+) as cofactor. Fe(3+) serves as cofactor.

It is found in the cytoplasm. The enzyme catalyses 4-imidazolone-5-propanoate + H2O = N-formimidoyl-L-glutamate. It participates in amino-acid degradation; L-histidine degradation into L-glutamate; N-formimidoyl-L-glutamate from L-histidine: step 3/3. In terms of biological role, catalyzes the hydrolytic cleavage of the carbon-nitrogen bond in imidazolone-5-propanoate to yield N-formimidoyl-L-glutamate. It is the third step in the universal histidine degradation pathway. In Bradyrhizobium sp. (strain BTAi1 / ATCC BAA-1182), this protein is Imidazolonepropionase.